The following is a 591-amino-acid chain: Monoterpene synthase 8, chloroplastic (591 aa).

The N-terminal 46 residues, 1–46 (MSLLLAPPSYFPFRGLRRSTAAKQPPCLRLVKCTADRQSPEAARRS), are a transit peptide targeting the chloroplast. The Mg(2+) site is built by D346, D350, and E497. The short motif at 346 to 350 (DDVYD) is the DDXXD motif element.

Belongs to the terpene synthase family. Tpsa subfamily. Mg(2+) is required as a cofactor. The cofactor is Mn(2+). Highly expressed in flowers, petals and sepals, but almost undetectable in vegetative organs.

The protein resides in the plastid. Its subcellular location is the chloroplast. It catalyses the reaction (2E)-geranyl diphosphate + H2O = (R)-linalool + diphosphate. The enzyme catalyses (2E)-geranyl diphosphate + H2O = (S)-linalool + diphosphate. The catalysed reaction is (2E,6E)-farnesyl diphosphate = (S)-beta-bisabolene + diphosphate. It carries out the reaction (2E,6E)-farnesyl diphosphate = (E,R)-alpha-bisabolene + diphosphate. It catalyses the reaction (2E,6E)-farnesyl diphosphate = (E)-beta-farnesene + diphosphate. The enzyme catalyses (2E,6E)-farnesyl diphosphate = beta-sesquiphellandrene + diphosphate. The catalysed reaction is (2E,6E)-farnesyl diphosphate = (1S,5S,6R)-alpha-bergamotene + diphosphate. Its pathway is secondary metabolite biosynthesis; terpenoid biosynthesis. Functionally, sesquiterpene and monoterpene synthase involved in the biosynthesis of volatile compounds present in floral scent. Mediates the conversion of (2E)-geranyl diphosphate (GPP) into linalool, with trace levels of myrcene, limonene and (Z)-beta-ocimene. Also acts as a sesquiterpene synthase by catalyzing the conversion of farnesyl diphosphate (FPP) to alpha-bergamotene and beta-bisabolene and to minor products including alpha-curcumene, cis-alpha-bisabolene, beta-farnesene and beta-sesquiphellandrene, as well as seven other unidentified sesquiterpenes. The sequence is that of Monoterpene synthase 8, chloroplastic from Hedychium coronarium (White butterfly ginger-lily).